The sequence spans 483 residues: UDP-N-acetylmuramoyl-L-alanyl-D-glutamate--2,6-diaminopimelate ligase (483 aa).

Residue Ser29 coordinates UDP-N-acetyl-alpha-D-muramoyl-L-alanyl-D-glutamate. Residue Gly112 to Thr118 participates in ATP binding. UDP-N-acetyl-alpha-D-muramoyl-L-alanyl-D-glutamate is bound by residues Thr154–Thr155, Ser181, and Arg189. Lys221 carries the N6-carboxylysine modification. Residues Arg380, Asp404–Arg407, Gly454, and Glu458 contribute to the meso-2,6-diaminopimelate site. Residues Asp404–Arg407 carry the Meso-diaminopimelate recognition motif motif.

Belongs to the MurCDEF family. MurE subfamily. Mg(2+) serves as cofactor. Post-translationally, carboxylation is probably crucial for Mg(2+) binding and, consequently, for the gamma-phosphate positioning of ATP.

It localises to the cytoplasm. It carries out the reaction UDP-N-acetyl-alpha-D-muramoyl-L-alanyl-D-glutamate + meso-2,6-diaminopimelate + ATP = UDP-N-acetyl-alpha-D-muramoyl-L-alanyl-gamma-D-glutamyl-meso-2,6-diaminopimelate + ADP + phosphate + H(+). Its pathway is cell wall biogenesis; peptidoglycan biosynthesis. Functionally, catalyzes the addition of meso-diaminopimelic acid to the nucleotide precursor UDP-N-acetylmuramoyl-L-alanyl-D-glutamate (UMAG) in the biosynthesis of bacterial cell-wall peptidoglycan. This chain is UDP-N-acetylmuramoyl-L-alanyl-D-glutamate--2,6-diaminopimelate ligase, found in Clostridium botulinum (strain ATCC 19397 / Type A).